We begin with the raw amino-acid sequence, 348 residues long: Dihydroorotate dehydrogenase (quinone) (348 aa).

FMN contacts are provided by residues 65-69 (AGLDK) and threonine 89. Residue lysine 69 participates in substrate binding. Position 114 to 118 (114 to 118 (NRLGF)) interacts with substrate. Residues asparagine 147 and asparagine 180 each contribute to the FMN site. Asparagine 180 contacts substrate. The active-site Nucleophile is the serine 183. Asparagine 185 serves as a coordination point for substrate. FMN-binding residues include lysine 225 and threonine 253. Substrate is bound at residue 254-255 (NT). FMN is bound by residues glycine 276, glycine 305, and 326-327 (YS).

Belongs to the dihydroorotate dehydrogenase family. Type 2 subfamily. In terms of assembly, monomer. FMN serves as cofactor.

Its subcellular location is the cell membrane. The enzyme catalyses (S)-dihydroorotate + a quinone = orotate + a quinol. It functions in the pathway pyrimidine metabolism; UMP biosynthesis via de novo pathway; orotate from (S)-dihydroorotate (quinone route): step 1/1. In terms of biological role, catalyzes the conversion of dihydroorotate to orotate with quinone as electron acceptor. The polypeptide is Dihydroorotate dehydrogenase (quinone) (Delftia acidovorans (strain DSM 14801 / SPH-1)).